The sequence spans 397 residues: MALLRGVFVVAAKRTPFGAYGGLLKDFTATDLSEFAAKAALSAGKVSPETVDSVIMGNVLQSSSDAIYLARHVGLRVGIPKETPALTINRLCGSGFQSIVNGCQEICVKEAEVVLCGGTESMSQAPYCVRTVRFGTKLGSDIKLEDSLWVSLTDQHVQLPIAMTAENLAVKHKISREECDKYALQSQQRWKAANDAGYFNDEMAPIEVKTKKGKQTMQVDEHARPQTTLEQLQKLPPVFKKDGTVTAGNASGIADGAGAVIIASEDAVKKHNFTPLARIVGYFVSGCDPSIMGIGPVPAISGALKKAGLSLKDMDLVEVNEAFAPQYLAVERSLDLDISKTNVNGGAIALGHPLGGSGSRITAHLVHELRRRGGKYAVGSACIGGGQGIAVIIQSTA.

The transit peptide at 1–16 directs the protein to the mitochondrion; not cleaved; that stretch reads MALLRGVFVVAAKRTP. An N6-acetyllysine; alternate modification is found at Lys-25. The residue at position 25 (Lys-25) is an N6-succinyllysine; alternate. The residue at position 45 (Lys-45) is an N6-succinyllysine. Residue Cys-92 is the Acyl-thioester intermediate of the active site. Position 119 is a phosphothreonine (Thr-119). Phosphoserine is present on Ser-121. Tyr-127 carries the post-translational modification Phosphotyrosine. At Thr-136 the chain carries Phosphothreonine. Lys-137 bears the N6-acetyllysine; alternate mark. The residue at position 137 (Lys-137) is an N6-succinyllysine; alternate. Ser-140 bears the Phosphoserine mark. N6-acetyllysine; alternate occurs at positions 143, 171, 191, and 209. 4 positions are modified to N6-succinyllysine; alternate: Lys-143, Lys-171, Lys-191, and Lys-209. N6-succinyllysine is present on residues Lys-211, Lys-212, and Lys-214. CoA-binding residues include Arg-224 and Thr-227. Lys-234 carries the post-translational modification N6-acetyllysine; alternate. An N6-succinyllysine; alternate modification is found at Lys-234. Lys-240 is subject to N6-succinyllysine. Lys-241 is modified (N6-acetyllysine). Ser-251 lines the CoA pocket. N6-acetyllysine is present on residues Lys-269 and Lys-270. Lys-305 is subject to N6-acetyllysine; alternate. At Lys-305 the chain carries N6-succinyllysine; alternate. A Phosphoserine modification is found at Ser-310. Residue Lys-312 is modified to N6-acetyllysine; alternate. Lys-312 carries the N6-succinyllysine; alternate modification. At Ser-333 the chain carries Phosphoserine. N6-acetyllysine is present on residues Lys-340 and Lys-375. The active-site Proton donor/acceptor is the Cys-382.

It belongs to the thiolase-like superfamily. Thiolase family. As to quaternary structure, homotetramer. Interacts with BNIP3.

The protein resides in the mitochondrion. The catalysed reaction is an acyl-CoA + acetyl-CoA = a 3-oxoacyl-CoA + CoA. It catalyses the reaction 2 acetyl-CoA = acetoacetyl-CoA + CoA. The enzyme catalyses acetyl-CoA + H2O = acetate + CoA + H(+). It carries out the reaction propanoyl-CoA + H2O = propanoate + CoA + H(+). The catalysed reaction is butanoyl-CoA + H2O = butanoate + CoA + H(+). It catalyses the reaction hexanoyl-CoA + H2O = hexanoate + CoA + H(+). The enzyme catalyses octanoyl-CoA + H2O = octanoate + CoA + H(+). It carries out the reaction decanoyl-CoA + H2O = decanoate + CoA + H(+). The catalysed reaction is dodecanoyl-CoA + H2O = dodecanoate + CoA + H(+). It catalyses the reaction tetradecanoyl-CoA + H2O = tetradecanoate + CoA + H(+). The enzyme catalyses hexadecanoyl-CoA + H2O = hexadecanoate + CoA + H(+). Its pathway is lipid metabolism; fatty acid beta-oxidation. In terms of biological role, in the production of energy from fats, this is one of the enzymes that catalyzes the last step of the mitochondrial beta-oxidation pathway, an aerobic process breaking down fatty acids into acetyl-CoA. Using free coenzyme A/CoA, catalyzes the thiolytic cleavage of medium- to long-chain unbranched 3-oxoacyl-CoAs into acetyl-CoA and a fatty acyl-CoA shortened by two carbon atoms. Also catalyzes the condensation of two acetyl-CoA molecules into acetoacetyl-CoA and could be involved in the production of ketone bodies. Also displays hydrolase activity on various fatty acyl-CoAs. Thereby, could be responsible for the production of acetate in a side reaction to beta-oxidation. Abolishes BNIP3-mediated apoptosis and mitochondrial damage. This is 3-ketoacyl-CoA thiolase, mitochondrial (ACAA2) from Pongo abelii (Sumatran orangutan).